The following is a 418-amino-acid chain: F-box/kelch-repeat protein SKIP20 (418 aa).

In terms of domain architecture, F-box spans 14 to 61 (DLIPGLPEELAIECLVRVPFQFHSSIKSVCRSWKCVISSRSFIKERIG). Residues 79–104 (PSPAMMEGGEMSQKKKEEEEGESQMT) are disordered. 4 Kelch repeats span residues 104 to 150 (TQQL…AIQD), 153 to 206 (KVLL…SVGS), 208 to 255 (KVYV…SMAT), and 258 to 314 (GFCV…EFPG).

Part of a SCF (ASK-cullin-F-box) protein ligase complex. Interacts with SKP1A/ASK1 and SPK1B/ASK2.

The protein resides in the nucleus. It functions in the pathway protein modification; protein ubiquitination. Functionally, component of SCF(ASK-cullin-F-box) E3 ubiquitin ligase complexes, which may mediate the ubiquitination and subsequent proteasomal degradation of target proteins. This is F-box/kelch-repeat protein SKIP20 (SKIP20) from Arabidopsis thaliana (Mouse-ear cress).